A 305-amino-acid chain; its full sequence is tRNA pseudouridine synthase B (305 aa).

Asp-48 serves as the catalytic Nucleophile.

It belongs to the pseudouridine synthase TruB family. Type 1 subfamily.

It catalyses the reaction uridine(55) in tRNA = pseudouridine(55) in tRNA. In terms of biological role, responsible for synthesis of pseudouridine from uracil-55 in the psi GC loop of transfer RNAs. The polypeptide is tRNA pseudouridine synthase B (Pseudomonas fluorescens (strain Pf0-1)).